A 468-amino-acid polypeptide reads, in one-letter code: Zinc-regulated transporter 1 (468 aa).

The first 17 residues, 1 to 17 (MKFTHLFFIGLLTKVYT), serve as a signal peptide directing secretion. The Extracellular portion of the chain corresponds to 18 to 185 (ETVTVLSTRS…VKRDYDIPLR (168 aa)). N-linked (GlcNAc...) asparagine glycans are attached at residues Asn57 and Asn67. The helical transmembrane segment at 186-206 (IGLLFVILVTSGIGSFGPIVL) threads the bilayer. Residues 207–217 (KQFVNLSQENY) lie on the Cytoplasmic side of the membrane. Residues 218 to 238 (IIVIIKQFGTGIIISTAFVHL) traverse the membrane as a helical segment. Over 239 to 257 (MTHAQLMWSNSCLKIKYEG) the chain is Extracellular. The chain crosses the membrane as a helical span at residues 258–278 (TGASITMAGIFIAFIIEYIAL). At 279-314 (RIVNARDTGKVDKKEIEETSSNEQSLHGISVNDKIS) the chain is on the cytoplasmic side. The chain crosses the membrane as a helical span at residues 315–335 (VMILEAGIIFHSILIGITLVV). Over 336–338 (TDD) the chain is Extracellular. A helical transmembrane segment spans residues 339–359 (VYFITLFIVIVFHQFFEGLAL). The Cytoplasmic portion of the chain corresponds to 360 to 374 (SSRIISITNASLSTK). Residues 375–395 (LVMALMFALITPIGMAIGIGV) form a helical membrane-spanning segment. Over 396–406 (LNKFNGNDPST) the chain is Extracellular. Residues 407–427 (LIALGTLDSFSAGVLLWTGLI) traverse the membrane as a helical segment. Residues 428 to 447 (EMWSHDWLHGHLRNSSFVKT) are Cytoplasmic-facing. The helical transmembrane segment at 448–468 (TVALVSLILGMLLMSLLGNWA) threads the bilayer.

Belongs to the ZIP transporter (TC 2.A.5) family.

Its subcellular location is the cell membrane. The enzyme catalyses Zn(2+)(in) = Zn(2+)(out). In terms of biological role, zinc transporter that acts with PRA1 in sequestration of zinc from host tissues during infection. The pH-regulated antigen 1 (PRA1) binds zinc from its environment and then reassociates with ZRT1 to acquire this essential metal. This is Zinc-regulated transporter 1 (ZRT101) from Candida albicans (strain SC5314 / ATCC MYA-2876) (Yeast).